We begin with the raw amino-acid sequence, 187 residues long: Capsid protein (187 aa).

Positions 151–180 (RRGSARVVRSPRRRTPSPRRRRSQSPRRRP) are enriched in basic residues. A disordered region spans residues 151 to 187 (RRGSARVVRSPRRRTPSPRRRRSQSPRRRPQSPASNC). Ser160, Ser167, and Ser175 each carry phosphoserine; by host. A run of 3 repeats spans residues 160 to 164 (SPRRR), 167 to 171 (SPRRR), and 175 to 179 (SPRRR). The tract at residues 160-179 (SPRRRTPSPRRRRSQSPRRR) is 3 X 5 AA repeats of S-P-R-R-R. The Bipartite nuclear localization signal motif lies at 163-180 (RRTPSPRRRRSQSPRRRP). An RNA binding region spans residues 181 to 187 (QSPASNC).

It belongs to the orthohepadnavirus core antigen family. Homodimerizes, then multimerizes. Interacts with cytosol exposed regions of viral L glycoprotein present in the reticulum-to-Golgi compartment. Interacts with human FLNB. Phosphorylated form interacts with host importin alpha; this interaction depends on the exposure of the NLS, which itself depends upon genome maturation and/or phosphorylation of the capsid protein. Interacts with host NUP153. In terms of processing, phosphorylated by host SRPK1, SRPK2, and maybe protein kinase C or GAPDH. Phosphorylation is critical for pregenomic RNA packaging. Protein kinase C phosphorylation is stimulated by HBx protein and may play a role in transport of the viral genome to the nucleus at the late step during the viral replication cycle.

It localises to the virion. Its subcellular location is the host cytoplasm. Its function is as follows. Self assembles to form an icosahedral capsid. Most capsids appear to be large particles with an icosahedral symmetry of T=4 and consist of 240 copies of capsid protein, though a fraction forms smaller T=3 particles consisting of 180 capsid proteins. Entering capsids are transported along microtubules to the nucleus. Phosphorylation of the capsid is thought to induce exposure of nuclear localization signal in the C-terminal portion of the capsid protein that allows binding to the nuclear pore complex via the importin (karyopherin-) alpha and beta. Capsids are imported in intact form through the nuclear pore into the nuclear basket, where it probably binds NUP153. Only capsids that contain the mature viral genome can release the viral DNA and capsid protein into the nucleoplasm. Immature capsids get stuck in the basket. Capsids encapsulate the pre-genomic RNA and the P protein. Pre-genomic RNA is reverse-transcribed into DNA while the capsid is still in the cytoplasm. The capsid can then either be directed to the nucleus, providing more genomes for transcription, or bud through the endoplasmic reticulum to provide new virions. This chain is Capsid protein, found in Urocitellus parryii kennicottii (ASHV).